A 260-amino-acid chain; its full sequence is Glucosamine-6-phosphate deaminase (260 aa).

Catalysis depends on D67, which acts as the Proton acceptor; for enolization step. D136 serves as the catalytic For ring-opening step. H138 functions as the Proton acceptor; for ring-opening step in the catalytic mechanism. E143 functions as the For ring-opening step in the catalytic mechanism.

It belongs to the glucosamine/galactosamine-6-phosphate isomerase family. NagB subfamily.

The catalysed reaction is alpha-D-glucosamine 6-phosphate + H2O = beta-D-fructose 6-phosphate + NH4(+). It functions in the pathway amino-sugar metabolism; N-acetylneuraminate degradation; D-fructose 6-phosphate from N-acetylneuraminate: step 5/5. Its function is as follows. Catalyzes the reversible isomerization-deamination of glucosamine 6-phosphate (GlcN6P) to form fructose 6-phosphate (Fru6P) and ammonium ion. The protein is Glucosamine-6-phosphate deaminase of Arthrobacter sp. (strain FB24).